A 131-amino-acid chain; its full sequence is Type IV wide pilus major component PilA4 (131 aa).

Residues 1-6 (MRNAKG) constitute a propeptide, leader sequence. Phe-7 bears the N-methylphenylalanine mark. The helical transmembrane segment at 7-27 (FTLIELLIVIAIIAILAAVLI) threads the bilayer. Cys-95 and Cys-130 are oxidised to a cystine.

In terms of assembly, interacts with PilQ. Found in three forms of 14-kDa, 18-kDa and a glycosylated 23-kDa form. Both narrow and wide pili are glycosylated.

Its subcellular location is the cell inner membrane. The protein resides in the cell outer membrane. It localises to the periplasm. Its function is as follows. Plays an essential role in the assembly of two types of T4P pili: a wide and a narrow that participate in natural transformation and twitching motility. Major component of the wide pilus that is essential for natural transformation working as a DNA translocator structure that spans the inner and outer membranes. In addition, participates in the assembly of the narrow pilus composed of the PilA5 subunit that is required for twitching motility. This Thermus thermophilus (strain ATCC BAA-163 / DSM 7039 / HB27) protein is Type IV wide pilus major component PilA4 (pilA4).